A 101-amino-acid chain; its full sequence is Small ribosomal subunit protein uS10 (101 aa).

This sequence belongs to the universal ribosomal protein uS10 family. Part of the 30S ribosomal subunit.

Involved in the binding of tRNA to the ribosomes. In Phocaeicola vulgatus (strain ATCC 8482 / DSM 1447 / JCM 5826 / CCUG 4940 / NBRC 14291 / NCTC 11154) (Bacteroides vulgatus), this protein is Small ribosomal subunit protein uS10.